We begin with the raw amino-acid sequence, 341 residues long: Golgi-associated RAB2 interactor protein 1B (341 aa).

The protein belongs to the GARIN family. As to expression, expressed in testis (at protein level).

It is found in the golgi apparatus. Functionally, RAB2B effector protein required for accurate acrosome formation and normal male fertility. In complex with RAB2A/RAB2B, seems to suppress excessive vesicle trafficking during acrosome formation. The polypeptide is Golgi-associated RAB2 interactor protein 1B (Mus musculus (Mouse)).